A 591-amino-acid polypeptide reads, in one-letter code: Adenine deaminase (591 aa).

Belongs to the metallo-dependent hydrolases superfamily. Adenine deaminase family. In terms of assembly, homodimer. It depends on Mn(2+) as a cofactor.

The catalysed reaction is adenine + H2O + H(+) = hypoxanthine + NH4(+). This is Adenine deaminase from Edwardsiella ictaluri (strain 93-146).